The chain runs to 819 residues: Capsid-associated protein Vp91 (819 aa).

An N-terminal signal peptide occupies residues Met1–Thr18. The segment at Cys147–Cys196 adopts a C2HC BV-type zinc-finger fold. Cystine bridges form between Cys207–Cys220 and Cys260–Cys273. A glycan (N-linked (GlcNAc...) asparagine; by host) is linked at Asn210. The Chitin-binding type-2 domain occupies Asn223–Phe281. Asn588 and Asn609 each carry an N-linked (GlcNAc...) asparagine; by host glycan. The segment at Gly650–Glu671 is disordered. The span at Glu658 to Glu671 shows a compositional bias: pro residues. An N-linked (GlcNAc...) asparagine; by host glycan is attached at Asn752.

The protein localises to the virion. Its function is as follows. Probable capsid-associated protein. The polypeptide is Capsid-associated protein Vp91 (p91) (Orgyia pseudotsugata (Douglas-fir tussock moth)).